A 59-amino-acid polypeptide reads, in one-letter code: Temperature acclimation protein A (59 aa).

Residues 1–55 form the CSD domain; the sequence is FNDEKGFGFITPESGPDLFVHFRAIQGNGFKSLKEGQKVTFIAVQGQKGMQADKV.

It localises to the cytoplasm. In terms of biological role, affects cell viability at low temperatures. The sequence is that of Temperature acclimation protein A (tapA) from Pseudomonas fragi.